The sequence spans 288 residues: Keratin-associated protein 5-4 (288 aa).

Repeat copies occupy residues 49–52 (CCVP), 55–58 (CCKP), 61–64 (CCVP), 201–204 (CCKP), 220–223 (CCKP), 239–242 (CCKP), 249–252 (CCKP), 268–271 (CCNP), and 278–281 (CCVP). Positions 49–281 (CCVPICCCKP…CCSQSSCCVP (233 aa)) are 9 X 4 AA repeats of C-C-X-P.

It belongs to the KRTAP type 5 family. As to quaternary structure, interacts with hair keratins. Restricted to hair root, not detected in any other tissues.

Functionally, in the hair cortex, hair keratin intermediate filaments are embedded in an interfilamentous matrix, consisting of hair keratin-associated protein (KRTAP), which are essential for the formation of a rigid and resistant hair shaft through their extensive disulfide bond cross-linking with abundant cysteine residues of hair keratins. The matrix proteins include the high-sulfur and high-glycine-tyrosine keratins. This Homo sapiens (Human) protein is Keratin-associated protein 5-4 (KRTAP5-4).